Here is a 191-residue protein sequence, read N- to C-terminus: Ribonuclease M5 (191 aa).

The Toprim domain maps to His8 to Pro91. Glu14, Asp60, and Asp62 together coordinate Mg(2+).

The protein belongs to the ribonuclease M5 family. The cofactor is Mg(2+).

It is found in the cytoplasm. The catalysed reaction is Endonucleolytic cleavage of RNA, removing 21 and 42 nucleotides, respectively, from the 5'- and 3'-termini of a 5S-rRNA precursor.. Its function is as follows. Required for correct processing of both the 5' and 3' ends of 5S rRNA precursor. Cleaves both sides of a double-stranded region yielding mature 5S rRNA in one step. This chain is Ribonuclease M5, found in Listeria monocytogenes serovar 1/2a (strain ATCC BAA-679 / EGD-e).